Reading from the N-terminus, the 758-residue chain is Dolichyl-phosphooligosaccharide-protein glycotransferase 2 (758 aa).

The Cytoplasmic portion of the chain corresponds to 1 to 6 (MKRRYS). A helical transmembrane segment spans residues 7–27 (ILIILLVAIFYRMITFRFKYL). Residues 28-92 (LGYDPYFHLA…KVFGVSLTTT (65 aa)) lie on the Extracellular side of the membrane. The DXD motif 1 motif lies at 29–31 (GYD). Aspartate 31 is a binding site for Mn(2+). The chain crosses the membrane as a helical span at residues 93-113 (FKITPVIFGVLTVIFLYLSLL). Residues 114-120 (KLYDEKR) are Cytoplasmic-facing. The chain crosses the membrane as a helical span at residues 121–141 (AFFGGFFLAISYGHVFRSMAN). At 142–145 (YYRG) the chain is on the extracellular side. The Mn(2+) site is built by arginine 144 and aspartate 146. The DXD motif 2 signature appears at 144 to 146 (RGD). Residues 146-166 (DNYMLFWYSVALLGISLALGI) form a helical membrane-spanning segment. Residues 167–175 (KKGKWKYKR) lie on the Cytoplasmic side of the membrane. 2 helical membrane-spanning segments follow: residues 176–196 (LIFY…WQAY) and 197–217 (YPIF…AFIL). At 218–226 (KKDKYLLDS) the chain is on the cytoplasmic side. A helical membrane pass occupies residues 227 to 247 (IILILSTAFGVLLANYLGGIF). The Extracellular segment spans residues 248 to 281 (GYGMLGYAKWLGKSVAKKLGLEFGYLKDVYLILH). The chain crosses the membrane as a helical span at residues 282-302 (LKYLVPISLSFVLVLILLGFL). Residues 303-310 (TKDIRIRS) are Cytoplasmic-facing. A helical membrane pass occupies residues 311-331 (LFLGIASFIGIIILFKRFEAL). Topologically, residues 332 to 352 (KELSTGFGIFKEAPILETQPT) are extracellular. Positions 340–343 (IFKE) match the TIXE motif motif. A helical membrane pass occupies residues 353–373 (SFKDLWAAFSLSFFLTPLFFI). The Cytoplasmic portion of the chain corresponds to 374-379 (RFKKPR). Residues 380–400 (VEDFLTLGLIIPSVYMLKTWT) form a helical membrane-spanning segment. Residue arginine 401 is a topological domain, extracellular. Arginine 401 contacts a glycophospholipid. A helical membrane pass occupies residues 402–422 (FLFIGSMAIAIMSGIGIVELY). Residues 423 to 433 (EAIKPRLNGKK) lie on the Cytoplasmic side of the membrane. Residues 434–454 (ALATGIITLVILPGVIAGLSF) form a helical membrane-spanning segment. Residues 455-758 (KEVCSLHPEM…DRGVFRLSYN (304 aa)) are Extracellular-facing. The segment at 488–490 (WWD) is interacts with target acceptor peptide in protein substrate. The WWDYG motif signature appears at 488–492 (WWDWG). Residues 540 to 547 (DFLKFGAI) carry the DK motif motif.

It belongs to the STT3 family. Mn(2+) is required as a cofactor. It depends on Mg(2+) as a cofactor.

It is found in the cell membrane. It catalyses the reaction an archaeal dolichyl phosphooligosaccharide + [protein]-L-asparagine = an archaeal dolichyl phosphate + a glycoprotein with the oligosaccharide chain attached by N-beta-D-glycosyl linkage to a protein L-asparagine.. The protein operates within protein modification; protein glycosylation. Oligosaccharyl transferase (OST) that catalyzes the initial transfer of a defined glycan (ManNAcXyl(2)GlcAMan(2)GalNAc in Pyrococcus) from the lipid carrier dolichol-monophosphate to an asparagine residue within an Asn-X-Ser/Thr consensus motif in nascent polypeptide chains, the first step in protein N-glycosylation. The polypeptide is Dolichyl-phosphooligosaccharide-protein glycotransferase 2 (aglB2) (Pyrococcus horikoshii (strain ATCC 700860 / DSM 12428 / JCM 9974 / NBRC 100139 / OT-3)).